The sequence spans 321 residues: Malate dehydrogenase (321 aa).

NAD(+)-binding positions include 10-15 and aspartate 34; that span reads GAGQIG. Arginine 83 and arginine 89 together coordinate substrate. Residues asparagine 96 and 119 to 121 contribute to the NAD(+) site; that span reads ITN. Substrate contacts are provided by asparagine 121 and arginine 152. The Proton acceptor role is filled by histidine 176.

It belongs to the LDH/MDH superfamily. MDH type 3 family.

It carries out the reaction (S)-malate + NAD(+) = oxaloacetate + NADH + H(+). In terms of biological role, catalyzes the reversible oxidation of malate to oxaloacetate. The protein is Malate dehydrogenase of Methylocella silvestris (strain DSM 15510 / CIP 108128 / LMG 27833 / NCIMB 13906 / BL2).